The primary structure comprises 309 residues: Ribonuclease Z (309 aa).

Zn(2+) contacts are provided by His63, His65, Asp67, His68, His145, Asp216, and His274. Catalysis depends on Asp67, which acts as the Proton acceptor.

This sequence belongs to the RNase Z family. As to quaternary structure, homodimer. Requires Zn(2+) as cofactor.

The catalysed reaction is Endonucleolytic cleavage of RNA, removing extra 3' nucleotides from tRNA precursor, generating 3' termini of tRNAs. A 3'-hydroxy group is left at the tRNA terminus and a 5'-phosphoryl group is left at the trailer molecule.. Zinc phosphodiesterase, which displays some tRNA 3'-processing endonuclease activity. Probably involved in tRNA maturation, by removing a 3'-trailer from precursor tRNA. The chain is Ribonuclease Z from Streptococcus pyogenes serotype M6 (strain ATCC BAA-946 / MGAS10394).